The chain runs to 419 residues: Methionine aminopeptidase 2 (419 aa).

Residues 1 to 69 form a disordered region; the sequence is MSTNSSNPNE…KITAIDNSYP (69 aa). Residues 11–29 show a composition bias toward basic and acidic residues; sequence VMEKVQDLKIDDSKPKVDS. A compositionally biased stretch (acidic residues) spans 30–41; the sequence is EEQPEAESDGES. Residues 48–61 show a composition bias toward basic residues; sequence KKKKKKKSKKKKKI. Histidine 172 provides a ligand contact to substrate. A divalent metal cation contacts are provided by aspartate 192, aspartate 203, and histidine 272. Histidine 280 is a binding site for substrate. A divalent metal cation contacts are provided by glutamate 305 and glutamate 400.

Belongs to the peptidase M24A family. Methionine aminopeptidase eukaryotic type 2 subfamily. It depends on Co(2+) as a cofactor. Zn(2+) is required as a cofactor. The cofactor is Mn(2+). Fe(2+) serves as cofactor.

The protein localises to the cytoplasm. The enzyme catalyses Release of N-terminal amino acids, preferentially methionine, from peptides and arylamides.. In terms of biological role, cotranslationally removes the N-terminal methionine from nascent proteins. The N-terminal methionine is often cleaved when the second residue in the primary sequence is small and uncharged (Met-Ala-, Cys, Gly, Pro, Ser, Thr, or Val). The sequence is that of Methionine aminopeptidase 2 from Debaryomyces hansenii (strain ATCC 36239 / CBS 767 / BCRC 21394 / JCM 1990 / NBRC 0083 / IGC 2968) (Yeast).